A 216-amino-acid chain; its full sequence is Guanylate kinase (216 aa).

Residues 11-189 (GVLIVISGPS…AVKKIEAILL (179 aa)) form the Guanylate kinase-like domain. 18–25 (GPSGAGKG) contacts ATP.

This sequence belongs to the guanylate kinase family.

Its subcellular location is the cytoplasm. It carries out the reaction GMP + ATP = GDP + ADP. In terms of biological role, essential for recycling GMP and indirectly, cGMP. The sequence is that of Guanylate kinase from Clostridium perfringens (strain SM101 / Type A).